Here is a 665-residue protein sequence, read N- to C-terminus: BTB/POZ domain-containing protein At1g30440 (665 aa).

A BTB domain is found at 28-98 (SDIVVEVGEM…CYGVKLELTA (71 aa)). The region spanning 214–508 (DWWYEDASML…VQVLFFEQLQ (295 aa)) is the NPH3 domain. A disordered region spans residues 260–280 (LKRRRGGPESSGRFSTPLGSG). The span at 271 to 280 (GRFSTPLGSG) shows a compositional bias: polar residues. Ser-279 carries the post-translational modification Phosphoserine. Residues 281-306 (NVLSEEEQKNLLEEIQELLRMQKGLV) are a coiled coil. Tyr-449 is subject to Phosphotyrosine. A compositionally biased stretch (polar residues) spans 626 to 639 (SAQEGSVSKSNNEN). Positions 626 to 665 (SAQEGSVSKSNNENVKIEKLKDVKERRGKHKKASSISSER) are disordered. Positions 640–650 (VKIEKLKDVKE) are enriched in basic and acidic residues.

The protein belongs to the NPH3 family.

It participates in protein modification; protein ubiquitination. Functionally, may act as a substrate-specific adapter of an E3 ubiquitin-protein ligase complex (CUL3-RBX1-BTB) which mediates the ubiquitination and subsequent proteasomal degradation of target proteins. The chain is BTB/POZ domain-containing protein At1g30440 from Arabidopsis thaliana (Mouse-ear cress).